The following is a 429-amino-acid chain: Methylenetetrahydrofolate--tRNA-(uracil-5-)-methyltransferase TrmFO (429 aa).

7-12 (GAGLAG) lines the FAD pocket.

Belongs to the MnmG family. TrmFO subfamily. The cofactor is FAD.

The protein resides in the cytoplasm. The catalysed reaction is uridine(54) in tRNA + (6R)-5,10-methylene-5,6,7,8-tetrahydrofolate + NADH + H(+) = 5-methyluridine(54) in tRNA + (6S)-5,6,7,8-tetrahydrofolate + NAD(+). It catalyses the reaction uridine(54) in tRNA + (6R)-5,10-methylene-5,6,7,8-tetrahydrofolate + NADPH + H(+) = 5-methyluridine(54) in tRNA + (6S)-5,6,7,8-tetrahydrofolate + NADP(+). Its function is as follows. Catalyzes the folate-dependent formation of 5-methyl-uridine at position 54 (M-5-U54) in all tRNAs. This is Methylenetetrahydrofolate--tRNA-(uracil-5-)-methyltransferase TrmFO from Thermosipho melanesiensis (strain DSM 12029 / CIP 104789 / BI429).